A 242-amino-acid polypeptide reads, in one-letter code: Octanoyltransferase (242 aa).

Positions 31–206 constitute a BPL/LPL catalytic domain; it reads SQTTDEIWFL…LFLKNFGYNQ (176 aa). Substrate contacts are provided by residues 70 to 77, 137 to 139, and 150 to 152; these read RGGQVTYH, SIG, and GLA. Catalysis depends on Cys168, which acts as the Acyl-thioester intermediate.

This sequence belongs to the LipB family.

The protein resides in the cytoplasm. It catalyses the reaction octanoyl-[ACP] + L-lysyl-[protein] = N(6)-octanoyl-L-lysyl-[protein] + holo-[ACP] + H(+). The protein operates within protein modification; protein lipoylation via endogenous pathway; protein N(6)-(lipoyl)lysine from octanoyl-[acyl-carrier-protein]: step 1/2. In terms of biological role, catalyzes the transfer of endogenously produced octanoic acid from octanoyl-acyl-carrier-protein onto the lipoyl domains of lipoate-dependent enzymes. Lipoyl-ACP can also act as a substrate although octanoyl-ACP is likely to be the physiological substrate. This is Octanoyltransferase from Coxiella burnetii (strain Dugway 5J108-111).